The following is a 296-amino-acid chain: MFS-type transporter pytF (296 aa).

7 helical membrane-spanning segments follow: residues 30 to 50 (WLVV…LNSF), 72 to 92 (WIGS…GPVF), 98 to 118 (KVLF…VSLC), 124 to 144 (FILA…YPTI), 157 to 177 (LAMG…PLIL), 180 to 200 (LFAV…SFAL), and 238 to 258 (VVGM…IPLF). Asparagine 265 is a glycosylation site (N-linked (GlcNAc...) asparagine). A helical membrane pass occupies residues 271-291 (SLISILNAGSFVGRIVSGALA).

This sequence belongs to the major facilitator superfamily. Monocarboxylate porter (TC 2.A.1.13) family.

Its subcellular location is the cell membrane. Functionally, MFS-type transporter; part of the gene cluster that mediates the biosynthesis of pyranterreones, a family of antioxidative compounds. Directly involved in the secretion of pyranterreones. This Aspergillus terreus (strain NIH 2624 / FGSC A1156) protein is MFS-type transporter pytF.